A 179-amino-acid polypeptide reads, in one-letter code: ATP-dependent protease subunit HslV (179 aa).

T5 is an active-site residue. Positions 164 and 167 each coordinate Na(+).

The protein belongs to the peptidase T1B family. HslV subfamily. As to quaternary structure, a double ring-shaped homohexamer of HslV is capped on each side by a ring-shaped HslU homohexamer. The assembly of the HslU/HslV complex is dependent on binding of ATP.

It localises to the cytoplasm. It catalyses the reaction ATP-dependent cleavage of peptide bonds with broad specificity.. Allosterically activated by HslU binding. Protease subunit of a proteasome-like degradation complex believed to be a general protein degrading machinery. The polypeptide is ATP-dependent protease subunit HslV (Carboxydothermus hydrogenoformans (strain ATCC BAA-161 / DSM 6008 / Z-2901)).